We begin with the raw amino-acid sequence, 974 residues long: UvrABC system protein A (974 aa).

34-41 (GLSGSGKS) lines the ATP pocket. 2 consecutive ABC transporter domains span residues 331–610 (WARS…TNSL) and 630–959 (ISKT…QFLK). 663–670 (GVSGGGKS) contributes to the ATP binding site. The C4-type zinc-finger motif lies at 762-788 (CEACQGDGVIKIEMHFLPDVYVTCDVC).

It belongs to the ABC transporter superfamily. UvrA family. Forms a heterotetramer with UvrB during the search for lesions.

The protein localises to the cytoplasm. The UvrABC repair system catalyzes the recognition and processing of DNA lesions. UvrA is an ATPase and a DNA-binding protein. A damage recognition complex composed of 2 UvrA and 2 UvrB subunits scans DNA for abnormalities. When the presence of a lesion has been verified by UvrB, the UvrA molecules dissociate. The chain is UvrABC system protein A from Brucella abortus (strain 2308).